The chain runs to 153 residues: Large ribosomal subunit protein uL22 (153 aa).

This sequence belongs to the universal ribosomal protein uL22 family. Part of the 50S ribosomal subunit.

In terms of biological role, this protein binds specifically to 23S rRNA. It makes multiple contacts with different domains of the 23S rRNA in the assembled 50S subunit and ribosome. Its function is as follows. The globular domain of the protein is located near the polypeptide exit tunnel on the outside of the subunit, while an extended beta-hairpin is found that lines the wall of the exit tunnel in the center of the 70S ribosome. This chain is Large ribosomal subunit protein uL22, found in Methanococcus aeolicus (strain ATCC BAA-1280 / DSM 17508 / OCM 812 / Nankai-3).